The sequence spans 119 residues: Bombesin (119 aa).

Residues 1–29 form the signal peptide; that stretch reads MSAIPLNRILPLGFLFHLLIFSFISLSSC. A propeptide spanning residues 30 to 44 is cleaved from the precursor; that stretch reads MEFVEDPNNQGRISL. The residue at position 58 (Met-58) is a Methionine amide. Residues 62–119 constitute a propeptide that is removed on maturation; the sequence is SLQDTDFEEMESFAKRNVENMRAALLQEQNRAESERELRHAQLVVRNILEQYLKNMQN.

Belongs to the bombesin/neuromedin-B/ranatensin family. In terms of tissue distribution, localized to the cutaneous granular glands in the skin and the brain.

It is found in the secreted. Stimulates smooth muscle contraction. Role in induction of hypothermia, stimulation of DNA replication and release of many gastrointestinal hormones. This Bombina orientalis (Oriental fire-bellied toad) protein is Bombesin.